A 291-amino-acid chain; its full sequence is Protease HtpX homolog (291 aa).

2 helical membrane-spanning segments follow: residues V4–I24 and M38–L58. Residue H144 participates in Zn(2+) binding. The active site involves E145. H148 lines the Zn(2+) pocket. 2 consecutive transmembrane segments (helical) span residues G152–S172 and I199–F219. Position 224 (E224) interacts with Zn(2+).

The protein belongs to the peptidase M48B family. Zn(2+) is required as a cofactor.

The protein localises to the cell inner membrane. The chain is Protease HtpX homolog from Chlorobium limicola (strain DSM 245 / NBRC 103803 / 6330).